A 671-amino-acid polypeptide reads, in one-letter code: DNA ligase (671 aa).

NAD(+)-binding positions include 31–35 (DAEYD), 80–81 (SL), and Glu-110. Lys-112 acts as the N6-AMP-lysine intermediate in catalysis. Positions 133, 167, 283, and 307 each coordinate NAD(+). Zn(2+) contacts are provided by Cys-401, Cys-404, Cys-419, and Cys-424. Residues 587–671 (EEELVFTGKT…YLPDEGGLNE (85 aa)) form the BRCT domain.

The protein belongs to the NAD-dependent DNA ligase family. LigA subfamily. The cofactor is Mg(2+). It depends on Mn(2+) as a cofactor.

The catalysed reaction is NAD(+) + (deoxyribonucleotide)n-3'-hydroxyl + 5'-phospho-(deoxyribonucleotide)m = (deoxyribonucleotide)n+m + AMP + beta-nicotinamide D-nucleotide.. DNA ligase that catalyzes the formation of phosphodiester linkages between 5'-phosphoryl and 3'-hydroxyl groups in double-stranded DNA using NAD as a coenzyme and as the energy source for the reaction. It is essential for DNA replication and repair of damaged DNA. The chain is DNA ligase from Listeria monocytogenes serotype 4b (strain F2365).